The primary structure comprises 309 residues: Dicarboxylate carrier UCP2 (309 aa).

Residues 1-16 (MVGFKATDVPPTATVK) are Mitochondrial intermembrane-facing. Solcar repeat units follow at residues 11-106 (PTAT…VKQF), 114-203 (AGIG…IKDT), and 212-297 (DDLP…LKRA). The segment at 16 to 63 (KFLGAGTAACIADLITFPLDTAKVRLQIQGESQGLVRTAASAQYRGVL) is important for interaction with long-chain fatty acids. Residues 17 to 40 (FLGAGTAACIADLITFPLDTAKVR) form a helical membrane-spanning segment. Residues 41 to 77 (LQIQGESQGLVRTAASAQYRGVLGTILTMVRTEGPRS) are Mitochondrial matrix-facing. The helical transmembrane segment at 78–103 (LYNGLVAGLQRQMSFASVRIGLYDSV) threads the bilayer. Over 104–119 (KQFYTKGSEHAGIGSR) the chain is Mitochondrial intermembrane. The helical transmembrane segment at 120–145 (LLAGSTTGALAVAVAQPTDVVKVRFQ) threads the bilayer. Topologically, residues 146–173 (AQARAGGGRRYQSTVEAYKTIAREEGIR) are mitochondrial matrix. Residues 174 to 199 (GLWKGTSPNVARNAIVNCAELVTYDL) traverse the membrane as a helical segment. Topologically, residues 200–217 (IKDTLLKANLMTDDLPCH) are mitochondrial intermembrane. A helical membrane pass occupies residues 218-242 (FTSAFGAGFCTTVIASPVDVVKTRY). Residues 243–268 (MNSALGQYHSAGHCALTMLRKEGPRA) lie on the Mitochondrial matrix side of the membrane. The chain crosses the membrane as a helical span at residues 269-294 (FYKGFMPSFLRLGSWNVVMFVTYEQL). Residues 278–285 (LRLGSWNV) are important for interaction with long-chain fatty acids. Topologically, residues 295–309 (KRALMAAYQSREAPF) are mitochondrial intermembrane.

This sequence belongs to the mitochondrial carrier (TC 2.A.29) family. As to quaternary structure, homotetramer. Adopts an asymmetrical dimer of dimers functional form. Interacts with MICU1 (when methylated); leading to decrease the calcium sensitivity of MICU1. As to expression, widely expressed. Highest in spleen, lung, white and brown adipose tissues. 4-6 times higher levels are detected in white adipose tissue of ob/ob and db/db mice when compared to lean littermates. Expressed in neurons of the ventromedial nucleus of the hypothalamus (at protein level). Expressed in thymocytes (at protein level).

It is found in the mitochondrion inner membrane. The catalysed reaction is L-aspartate(out) + phosphate(in) + H(+)(in) = L-aspartate(in) + phosphate(out) + H(+)(out). It carries out the reaction oxaloacetate(out) + phosphate(in) + H(+)(in) = oxaloacetate(in) + phosphate(out) + H(+)(out). The enzyme catalyses (S)-malate(out) + phosphate(in) + H(+)(in) = (S)-malate(in) + phosphate(out) + H(+)(out). It catalyses the reaction malonate(out) + phosphate(in) + H(+)(in) = malonate(in) + phosphate(out) + H(+)(out). The catalysed reaction is sulfate(out) + phosphate(in) + H(+)(in) = sulfate(in) + phosphate(out) + H(+)(out). It carries out the reaction (S)-malate(out) = (S)-malate(in). The enzyme catalyses L-aspartate(out) = L-aspartate(in). It catalyses the reaction phosphate(in) = phosphate(out). The catalysed reaction is chloride(in) = chloride(out). It carries out the reaction H(+)(in) = H(+)(out). The enzyme catalyses a long-chain fatty acid(out) = a long-chain fatty acid(in). Proton conductance is activated by free long-chain fatty acids and allosterically inhibited by purine nucleotides. Could be constitutively inhibited by GDP. In terms of biological role, antiporter that exports dicarboxylate intermediates of the Krebs cycle in exchange for phosphate plus a proton across the inner membrane of mitochondria, a process driven by mitochondrial motive force with an overall impact on glycolysis, glutaminolysis and glutathione-dependent redox balance. Continuous export of oxaloacetate and related four-carbon dicarboxylates from mitochondrial matrix into the cytosol negatively regulates the oxidation of acetyl-CoA substrates via the Krebs cycle lowering the ATP/ADP ratio and reactive oxygen species (ROS) production. May mediate inducible proton entry into the mitochondrial matrix affecting ATP turnover as a protection mechanism against oxidative stress. The proton currents are most likely associated with fatty acid flipping across the inner membrane of mitochondria in a metabolic process regulated by free fatty acids and purine nucleotides. Regulates the use of glucose as a source of energy. Required for glucose-induced DRP1-dependent mitochondrial fission and neuron activation in the ventromedial nucleus of the hypothalamus (VMH). This mitochondrial adaptation mechanism modulates the VMH pool of glucose-excited neurons with an impact on systemic glucose homeostasis. Regulates ROS levels and metabolic reprogramming of macrophages during the resolution phase of inflammation. Attenuates ROS production in response to IL33 to preserve the integrity of the Krebs cycle required for persistent production of itaconate and subsequent GATA3-dependent differentiation of inflammation-resolving alternatively activated macrophages. Can unidirectionally transport anions including L-malate, L-aspartate, phosphate and chloride ions. Does not mediate adaptive thermogenesis. The polypeptide is Dicarboxylate carrier UCP2 (Ucp2) (Mus musculus (Mouse)).